Here is a 316-residue protein sequence, read N- to C-terminus: Acetaldehyde dehydrogenase (316 aa).

12–15 serves as a coordination point for NAD(+); that stretch reads SGNI. Cysteine 132 acts as the Acyl-thioester intermediate in catalysis. NAD(+) contacts are provided by residues 163–171 and asparagine 289; that span reads SAGPGTRAN.

The protein belongs to the acetaldehyde dehydrogenase family.

It carries out the reaction acetaldehyde + NAD(+) + CoA = acetyl-CoA + NADH + H(+). The sequence is that of Acetaldehyde dehydrogenase (bphG) from Bordetella avium (strain 197N).